A 539-amino-acid chain; its full sequence is Glucose-6-phosphate isomerase (539 aa).

The active-site Proton donor is the E340. Active-site residues include H371 and K500.

It belongs to the GPI family.

It is found in the cytoplasm. It carries out the reaction alpha-D-glucose 6-phosphate = beta-D-fructose 6-phosphate. It functions in the pathway carbohydrate biosynthesis; gluconeogenesis. The protein operates within carbohydrate degradation; glycolysis; D-glyceraldehyde 3-phosphate and glycerone phosphate from D-glucose: step 2/4. Functionally, catalyzes the reversible isomerization of glucose-6-phosphate to fructose-6-phosphate. The polypeptide is Glucose-6-phosphate isomerase (Ruegeria pomeroyi (strain ATCC 700808 / DSM 15171 / DSS-3) (Silicibacter pomeroyi)).